Reading from the N-terminus, the 1684-residue chain is GRIP and coiled-coil domain-containing protein 2 (1684 aa).

Met1 carries the post-translational modification N-acetylmethionine. The interval 1–22 (MEDLVQDGVASPATPGTGKSKL) is disordered. Ser11 bears the Phosphoserine mark. A Phosphothreonine modification is found at Thr14. Residues 110–1618 (VTKMGDAHKE…REKSAANLEY (1509 aa)) adopt a coiled-coil conformation. A phosphoserine mark is found at Ser236, Ser1483, and Ser1487. A disordered region spans residues 1475–1502 (LKNEPTTRSPVSSQQSLKNLRERRNTDL). The span at 1477-1492 (NEPTTRSPVSSQQSLK) shows a compositional bias: polar residues. The tract at residues 1574–1613 (HLNGLLRETEATNAILMEQIKLLKSEIRRLERNQEREKSA) is mediates interaction with RAB6A. The mediates interaction with RAB9A stretch occupies residues 1574-1684 (HLNGLLRETE…SYLHSWSGLR (111 aa)). The GRIP domain occupies 1609–1659 (REKSAANLEYLKNVLLQFIFLKPGSERERLLPVINTMLQLSPEEKGKLAAV).

In terms of assembly, homodimer. Interacts (via GRIP domain) with RAB6A (preferentially in its GTP-bound form). May interact (RAB6A-dependent) with ARL1; according to PubMed:19703403, RAB6A and ARL1 are not involved in GCC2 Golgi localization as proposed by PubMed:18243103. Interacts (probably via GRIP domain) with RAB9A (preferentially in its GTP-bound form). Interacts with CLASP1 and CLASP2; recruits both proteins to membranes of the TGN. Interacts with STX16. As to expression, ubiquitous.

The protein localises to the cytoplasm. The protein resides in the golgi apparatus. It is found in the trans-Golgi network membrane. In terms of biological role, golgin which probably tethers transport vesicles to the trans-Golgi network (TGN) and regulates vesicular transport between the endosomes and the Golgi. As a RAB9A effector it is involved in recycling of the mannose 6-phosphate receptor from the late endosomes to the TGN. May also play a role in transport between the recycling endosomes and the Golgi. Required for maintenance of the Golgi structure, it is involved in the biogenesis of noncentrosomal, Golgi-associated microtubules through recruitment of CLASP1 and CLASP2. The protein is GRIP and coiled-coil domain-containing protein 2 (GCC2) of Homo sapiens (Human).